The following is a 186-amino-acid chain: Translation initiation factor IF-3 (186 aa).

Positions 1 to 20 are disordered; that stretch reads MINRNSGKDRDRSRSGDKEL.

It belongs to the IF-3 family. In terms of assembly, monomer.

The protein localises to the cytoplasm. In terms of biological role, IF-3 binds to the 30S ribosomal subunit and shifts the equilibrium between 70S ribosomes and their 50S and 30S subunits in favor of the free subunits, thus enhancing the availability of 30S subunits on which protein synthesis initiation begins. This chain is Translation initiation factor IF-3, found in Borrelia duttonii (strain Ly).